A 152-amino-acid polypeptide reads, in one-letter code: Phospholipase A2 GL16-1 (152 aa).

Positions 1–21 (MNPAHLLVLLAVCVSLLGAST) are cleaved as a signal peptide. The propeptide occupies 22–27 (IPPLPL). 7 cysteine pairs are disulfide-bonded: C38/C104, C54/C151, C56/C72, C71/C132, C78/C125, C88/C118, and C111/C123. Positions 55, 57, and 59 each coordinate Ca(2+). H75 is an active-site residue. D76 serves as a coordination point for Ca(2+). D126 is a catalytic residue.

This sequence belongs to the phospholipase A2 family. Group I subfamily. The cofactor is Ca(2+).

It is found in the secreted. It carries out the reaction a 1,2-diacyl-sn-glycero-3-phosphocholine + H2O = a 1-acyl-sn-glycero-3-phosphocholine + a fatty acid + H(+). PA2 catalyzes the calcium-dependent hydrolysis of the 2-acyl groups in 3-sn-phosphoglycerides. This is Phospholipase A2 GL16-1 from Laticauda semifasciata (Black-banded sea krait).